We begin with the raw amino-acid sequence, 293 residues long: MKKIRIGSRDSKLAIIQSEMVMAAIREFDPDIELELITMKTTGDKILDKTLDKIGGKGLFVKELDYALYNNEVDITVHSYKDMPLEDNPKLPVVALSKREDPRDAFVLPQGEIAENNEPIGSSSQRRQLQLKALFPNRKTAPIRGNVQTRLKKLDSGEFSAIVLAAAGIKRLGLESRISRYFSVDEILPAASQGIIAVQGRAGENFDFLKLFHSEESLCISQAERTFVREMNGGCSTPIAAYATIVESEIILKGLYHNEATGESKKECVSGSRQNPVELGYELVKKMESCRRI.

Cys235 carries the post-translational modification S-(dipyrrolylmethanemethyl)cysteine.

This sequence belongs to the HMBS family. Monomer. Dipyrromethane serves as cofactor.

It carries out the reaction 4 porphobilinogen + H2O = hydroxymethylbilane + 4 NH4(+). The protein operates within porphyrin-containing compound metabolism; protoporphyrin-IX biosynthesis; coproporphyrinogen-III from 5-aminolevulinate: step 2/4. Its function is as follows. Tetrapolymerization of the monopyrrole PBG into the hydroxymethylbilane pre-uroporphyrinogen in several discrete steps. This Ruminiclostridium cellulolyticum (strain ATCC 35319 / DSM 5812 / JCM 6584 / H10) (Clostridium cellulolyticum) protein is Porphobilinogen deaminase.